The following is a 496-amino-acid chain: DNA-directed DNA/RNA polymerase mu (496 aa).

Positions M1–P22 are disordered. Position 12 is a phosphoserine (S12). Residues S12–P22 are compositionally biased toward low complexity. The BRCT domain maps to P23–H122. Residues T241 and V243 each contribute to the Na(+) site. Positions R323–D332 are involved in ssDNA binding. D330, D332, and D420 together coordinate Mg(2+).

This sequence belongs to the DNA polymerase type-X family. Mg(2+) serves as cofactor.

The protein localises to the nucleus. The enzyme catalyses DNA(n) + a 2'-deoxyribonucleoside 5'-triphosphate = DNA(n+1) + diphosphate. Functionally, gap-filling polymerase involved in repair of DNA double-strand breaks by non-homologous end joining (NHEJ). Participates in immunoglobulin (Ig) light chain gene rearrangement in V(D)J recombination. The protein is DNA-directed DNA/RNA polymerase mu (Polm) of Mus musculus (Mouse).